The chain runs to 262 residues: Type III pantothenate kinase (262 aa).

ATP is bound at residue 9–16; the sequence is DSGNTRVK. Substrate is bound by residues tyrosine 93 and 100–103; that span reads GSDR. The Proton acceptor role is filled by aspartate 102. Aspartate 122 contacts K(+). Threonine 125 provides a ligand contact to ATP. Threonine 175 lines the substrate pocket.

Belongs to the type III pantothenate kinase family. Homodimer. Requires NH4(+) as cofactor. The cofactor is K(+).

It is found in the cytoplasm. The enzyme catalyses (R)-pantothenate + ATP = (R)-4'-phosphopantothenate + ADP + H(+). Its pathway is cofactor biosynthesis; coenzyme A biosynthesis; CoA from (R)-pantothenate: step 1/5. Catalyzes the phosphorylation of pantothenate (Pan), the first step in CoA biosynthesis. The protein is Type III pantothenate kinase of Nitrosospira multiformis (strain ATCC 25196 / NCIMB 11849 / C 71).